The following is a 576-amino-acid chain: ATP-dependent RNA helicase has1 (576 aa).

The tract at residues 1–94 (MGSAQDQTKK…STMGLSLPTD (94 aa)) is disordered. The segment covering 26 to 37 (RVVEADDQRELT) has biased composition (basic and acidic residues). Residues 51 to 66 (PPTDETPDAEDVEQTE) are compositionally biased toward acidic residues. The Q motif signature appears at 98–126 (QKFDELNLSEPTMKAIRQMGFETMTEIQQ). In terms of domain architecture, Helicase ATP-binding spans 129 to 305 (IPPTLAGRDI…RISLKPGPLY (177 aa)). Residue 142-149 (AKTGSGKT) participates in ATP binding. The short motif at 252 to 255 (DEAD) is the DEAD box element. One can recognise a Helicase C-terminal domain in the interval 319-490 (GVDQGYIICE…DIQSQLEKLI (172 aa)). The disordered stretch occupies residues 555–576 (DKVQARRPYGSQNKSARFKRRA).

Belongs to the DEAD box helicase family. DDX18/HAS1 subfamily. Associates in the nucleolus with the 60S and pre-60S ribosomal subunits.

It is found in the nucleus. The protein resides in the nucleolus. It carries out the reaction ATP + H2O = ADP + phosphate + H(+). Its function is as follows. ATP-dependent RNA helicase involved in 40S ribosomal subunit biogenesis. Required for the processing and cleavage of 35S pre-rRNA at sites A0, A1, and A2, leading to mature 18S rRNA. In Aspergillus terreus (strain NIH 2624 / FGSC A1156), this protein is ATP-dependent RNA helicase has1 (has1).